The sequence spans 380 residues: MGIKNLTQFLKKYKVYETIDVAELKYSKICIDTPMFLYKFVSQYPNSNEWLGCFVTLITWLRKWNIHPTFVFEGKAPPEKNQTQEARKESRQKIVSKTDAIEQDLRTYLKSGTITPLLLDTWQKIRSKSTKSLLVKRPLNLIVKNFINVDEIRLEIDRRRKYEFSITFAHVNLLKELLDLMGVGYIQSKGEAEADCVSLWYNNAVDYIVSEDTDVLAYTFAGGAPGTSTPKKVPNTTDLKVITGFNVGESSATIISKQRVLSTLKMTAESFKDFCIMCGTDYNKNIFRVGVEKAYKYISDYKVIENVPLDTSVLDHHNVRKIFRVKKSIKYADKVQWSKYPSDNFVEVLNTFIWTHAGGTVDSDHVFRVLTDPALDIVFE.

The N-domain stretch occupies residues 1 to 101 (MGIKNLTQFL…QKIVSKTDAI (101 aa)). Mg(2+)-binding residues include Asp32, Glu73, Glu191, Glu193, Asp212, Asp214, and Asp281. The I-domain stretch occupies residues 156 to 301 (IDRRRKYEFS…EKAYKYISDY (146 aa)).

The protein belongs to the XPG/RAD2 endonuclease family. Mg(2+) serves as cofactor.

It localises to the host nucleus. Probable endonuclease. The protein is Probable RAD2-like endonuclease 076L of Invertebrate iridescent virus 3 (IIV-3).